The primary structure comprises 638 residues: RNA exonuclease 3 (638 aa).

Residues Ala37–Leu136 are disordered. Basic and acidic residues predominate over residues Leu55–Asp76. The span at Ser77–Thr111 shows a compositional bias: polar residues. The region spanning Ile408–Leu584 is the Exonuclease domain. A compositionally biased stretch (polar residues) spans Asp612 to Thr622. The tract at residues Asp612–Ser638 is disordered.

This sequence belongs to the REXO1/REXO3 family.

The protein localises to the cytoplasm. The protein resides in the nucleus. In terms of biological role, 3' to 5' exoribonuclease required for proper 3' end maturation of MRP RNA and of the U5L snRNA. The chain is RNA exonuclease 3 (rex3) from Emericella nidulans (strain FGSC A4 / ATCC 38163 / CBS 112.46 / NRRL 194 / M139) (Aspergillus nidulans).